The primary structure comprises 141 residues: Large ribosomal subunit protein uL16m (141 aa).

Belongs to the universal ribosomal protein uL16 family.

The protein localises to the mitochondrion. The polypeptide is Large ribosomal subunit protein uL16m (RPL16) (Acanthamoeba castellanii (Amoeba)).